A 143-amino-acid chain; its full sequence is Probable glycine cleavage system H protein (143 aa).

A Lipoyl-binding domain is found at 36 to 118 (VATVGITDFA…YGEGWIFKIK (83 aa)). N6-lipoyllysine is present on Lys77.

This sequence belongs to the GcvH family. In terms of assembly, the glycine cleavage system is composed of four proteins: P, T, L and H. (R)-lipoate is required as a cofactor.

Its function is as follows. The glycine cleavage system catalyzes the degradation of glycine. The H protein shuttles the methylamine group of glycine from the P protein to the T protein. The chain is Probable glycine cleavage system H protein from Aeropyrum pernix (strain ATCC 700893 / DSM 11879 / JCM 9820 / NBRC 100138 / K1).